We begin with the raw amino-acid sequence, 116 residues long: Large ribosomal subunit protein uL18 (116 aa).

It belongs to the universal ribosomal protein uL18 family. As to quaternary structure, part of the 50S ribosomal subunit; part of the 5S rRNA/L5/L18/L25 subcomplex. Contacts the 5S and 23S rRNAs.

Its function is as follows. This is one of the proteins that bind and probably mediate the attachment of the 5S RNA into the large ribosomal subunit, where it forms part of the central protuberance. This Ectopseudomonas mendocina (strain ymp) (Pseudomonas mendocina) protein is Large ribosomal subunit protein uL18.